A 377-amino-acid chain; its full sequence is tRNA-specific 2-thiouridylase MnmA (377 aa).

Residues 12 to 19 and Met38 contribute to the ATP site; that span reads GMSGGVDS. An interaction with target base in tRNA region spans residues 98-100; the sequence is NPD. The Nucleophile role is filled by Cys103. Cys103 and Cys200 are joined by a disulfide. Gly127 provides a ligand contact to ATP. The interval 150–152 is interaction with tRNA; it reads KDQ. Catalysis depends on Cys200, which acts as the Cysteine persulfide intermediate. Residues 314 to 315 form an interaction with tRNA region; sequence RY.

The protein belongs to the MnmA/TRMU family.

It localises to the cytoplasm. It carries out the reaction S-sulfanyl-L-cysteinyl-[protein] + uridine(34) in tRNA + AH2 + ATP = 2-thiouridine(34) in tRNA + L-cysteinyl-[protein] + A + AMP + diphosphate + H(+). In terms of biological role, catalyzes the 2-thiolation of uridine at the wobble position (U34) of tRNA, leading to the formation of s(2)U34. The sequence is that of tRNA-specific 2-thiouridylase MnmA from Limosilactobacillus fermentum (strain NBRC 3956 / LMG 18251) (Lactobacillus fermentum).